The chain runs to 626 residues: Receptor-like protein 4 (626 aa).

Positions 1–22 (MMLRFILASLLLSSFSLYSSLA) are cleaved as a signal peptide. The Extracellular portion of the chain corresponds to 23–549 (RPAPYALRIS…CGPHLSSGAK (527 aa)). 4 N-linked (GlcNAc...) asparagine glycosylation sites follow: asparagine 61, asparagine 282, asparagine 333, and asparagine 417. LRR repeat units lie at residues 420 to 444 (RWFI…ISKL), 445 to 468 (KHLQ…LGSV), 470 to 492 (SLEV…LGEL), and 493 to 516 (TSLR…VGGR). 2 N-linked (GlcNAc...) asparagine glycosylation sites follow: asparagine 451 and asparagine 482. N-linked (GlcNAc...) asparagine glycosylation occurs at asparagine 524. A helical membrane pass occupies residues 550–570 (IGIAFGVSLAFLLIVACAMIW). Residues 571–626 (WKRRQNILRAQQIAARGAPYAKKRTHVSHDIQMSRHGHNNHGQARTAVENGPSLLS) lie on the Cytoplasmic side of the membrane. A disordered region spans residues 603 to 626 (MSRHGHNNHGQARTAVENGPSLLS).

The protein belongs to the RLP family.

The protein resides in the cell membrane. This Arabidopsis thaliana (Mouse-ear cress) protein is Receptor-like protein 4.